The primary structure comprises 373 residues: MAGDVNNEVNSKKRQGDTLAKERLLGLAEKIYNQFEEEVIPSVSLPSRTKANIEYSDESDVWVYGDRESERSAKTVKGAFQLLKTTYATDFLINEHLAHNRGSTLRELYYISEGWDYAKFKEQAESDRLIEDLELLTSLQREYFHMRPEEDGATMFGPIEISELTKRGARNIHCQKDVGEGGYQIPFNVENIEFKNHDASMIIAIETGGMYARLMENGFDEAYNAILVHLKGQPARSTRRIIKRMNEELEIPVAVFTDGDPWSYRIYASVAYGAIKSAHLSEFMATPAARFLGLQPSDIVEYELSTDKLTEQDISALRSELSDPRFESEYWKEQIQLQLDIGKKAEQQAFAGKGLDFVTEVYLPNRLKELGMV.

Residues 15 to 153 form the Topo IIA-type catalytic domain; sequence QGDTLAKERL…FHMRPEEDGA (139 aa). The O-(5'-phospho-DNA)-tyrosine intermediate role is filled by tyrosine 110. Residues glutamate 206 and aspartate 258 each contribute to the Mg(2+) site.

The protein belongs to the TOP6A family. In terms of assembly, homodimer. Heterotetramer of two Top6A and two Top6B chains. Mg(2+) serves as cofactor.

It catalyses the reaction ATP-dependent breakage, passage and rejoining of double-stranded DNA.. Relaxes both positive and negative superturns and exhibits a strong decatenase activity. The chain is Type 2 DNA topoisomerase 6 subunit A from Methanosarcina acetivorans (strain ATCC 35395 / DSM 2834 / JCM 12185 / C2A).